The primary structure comprises 194 residues: MEEKLKKTKIIFVVGGPGSGKGTQCEKIVQKYGYTHLSTGDLLRAEVSSGSARGKMLSEIMEKGQLVPLETVLDMLRDAMVAKVDTSKGFLIDGYPREVQQGEEFERRIAQPTLLLYVDAGPETMTKRLLKRGETSGRVDDNEETIKKRLETYYKATEPVIAFYEKRGIVRKVNAEGSVDNVFSQVCTHLDALK.

M1 is modified (N-acetylmethionine). An ATP-binding site is contributed by 18 to 23 (GSGKGT). S38 bears the Phosphoserine mark. Positions 38 to 67 (STGDLLRAEVSSGSARGKMLSEIMEKGQLV) are NMP. Residues T39, R44, 65–67 (QLV), 94–97 (GYPR), and Q101 contribute to the AMP site. The interval 131–141 (KRGETSGRVDD) is LID. R132 is an ATP binding site. Residues R138 and R149 each contribute to the AMP site. G177 provides a ligand contact to ATP.

The protein belongs to the adenylate kinase family. AK1 subfamily. In terms of assembly, monomer. Mg(2+) is required as a cofactor.

It localises to the cytoplasm. The catalysed reaction is a ribonucleoside 5'-phosphate + ATP = a ribonucleoside 5'-diphosphate + ADP. It catalyses the reaction AMP + ATP = 2 ADP. The enzyme catalyses dAMP + ATP = dADP + ADP. It carries out the reaction dATP + AMP = dADP + ADP. The catalysed reaction is dAMP + dATP = 2 dADP. It catalyses the reaction a 2'-deoxyribonucleoside 5'-diphosphate + ATP = a 2'-deoxyribonucleoside 5'-triphosphate + ADP. The enzyme catalyses a ribonucleoside 5'-diphosphate + ATP = a ribonucleoside 5'-triphosphate + ADP. It carries out the reaction CDP + GTP = CTP + GDP. The catalysed reaction is GDP + ATP = GTP + ADP. It catalyses the reaction UDP + ATP = UTP + ADP. The enzyme catalyses GTP + UDP = UTP + GDP. It carries out the reaction dTDP + GTP = dTTP + GDP. The catalysed reaction is dCDP + GTP = dCTP + GDP. It catalyses the reaction dGDP + ATP = dGTP + ADP. The enzyme catalyses dADP + GTP = dATP + GDP. It carries out the reaction thiamine diphosphate + ADP = thiamine triphosphate + AMP. In terms of biological role, catalyzes the reversible transfer of the terminal phosphate group between ATP and AMP. Also displays broad nucleoside diphosphate kinase activity. Plays an important role in cellular energy homeostasis and in adenine nucleotide metabolism. Also catalyzes at a very low rate the synthesis of thiamine triphosphate (ThTP) from thiamine diphosphate (ThDP) and ADP. The polypeptide is Adenylate kinase isoenzyme 1 (Bos taurus (Bovine)).